The sequence spans 311 residues: Ribosomal RNA small subunit methyltransferase H (311 aa).

Residues alanine 32 to histidine 34, aspartate 52, phenylalanine 79, aspartate 100, and glutamine 107 contribute to the S-adenosyl-L-methionine site.

The protein belongs to the methyltransferase superfamily. RsmH family.

Its subcellular location is the cytoplasm. The enzyme catalyses cytidine(1402) in 16S rRNA + S-adenosyl-L-methionine = N(4)-methylcytidine(1402) in 16S rRNA + S-adenosyl-L-homocysteine + H(+). In terms of biological role, specifically methylates the N4 position of cytidine in position 1402 (C1402) of 16S rRNA. The polypeptide is Ribosomal RNA small subunit methyltransferase H (Staphylococcus aureus (strain COL)).